A 690-amino-acid chain; its full sequence is MNAQTQASKNALHKSLERRHNASTSLAALWRPALLQAFVKLDPRQLLRSPVMLVVELTAVLTTLLCFVPDQAVPTSVALQIALWLWFTVLFANFAEALAEGRGKARADSLKAGSQGLSANKRRADGSFESVVASSLRKGDVVRVQAGEMIPGDGEVIEGVAAVNEAAITGESAPVIRESGGDRSAVTGNTQVVSDWLLVRIGANPGESTLDRMIALVEGAKRQKTPNEVALDILLIGLTLIFLLVVVTLKPFALFAGGNLPLVFLVALLVTLIPTTIGGLLSAIGIAGMDRLVRLNVIAKSGRAVEAAGDVHVLLLDKTGTITFGNRRCSALYAAPGVSGKELAEGALLASLADDTPEGKSIVEYLRILHPIEEPRREELTPIAFSAETRLSGVDWNGQVYRKGAVDAALRFIDLPREKMPEVLSREVDKIAQSGGTPLLVVANGRLLGAIHLKDVVKPGIRERFAELRRLGIRTVMVTGDNPLTAAAIAAEAGVDDVIAEATPEKKLARIRQEQGEGRLVAMCGDGANDAPALAQADVGMAMNDGTQAAREAANLVDLDSDPTKLLDVVQVGKELLVTRGALTTFSIANDVAKYFAILPALFVGIYPQLDVLNVMRLQSPQSAILSAIVFNALIIVALIPLALRGVRVQAADASQLLQRNLLIYGVGGLVAPFLGIKAIDLLLTAVGLA.

Helical transmembrane passes span 49-69, 72-92, 229-249, and 253-273; these read SPVMLVVELTAVLTTLLCFVP, AVPTSVALQIALWLWFTVLFA, VALDILLIGLTLIFLLVVVTL, and ALFAGGNLPLVFLVALLVTLI. The active-site 4-aspartylphosphate intermediate is the Asp-317. Residues Asp-354, Glu-358, 385–392, and Lys-403 contribute to the ATP site; that span reads FSAETRLS. 2 residues coordinate Mg(2+): Asp-526 and Asp-530. 3 helical membrane passes run 596–616, 624–644, and 662–682; these read FAILPALFVGIYPQLDVLNVM, AILSAIVFNALIIVALIPLAL, and LLIYGVGGLVAPFLGIKAIDL.

The protein belongs to the cation transport ATPase (P-type) (TC 3.A.3) family. Type IA subfamily. In terms of assembly, the system is composed of three essential subunits: KdpA, KdpB and KdpC.

Its subcellular location is the cell inner membrane. It catalyses the reaction K(+)(out) + ATP + H2O = K(+)(in) + ADP + phosphate + H(+). Functionally, part of the high-affinity ATP-driven potassium transport (or Kdp) system, which catalyzes the hydrolysis of ATP coupled with the electrogenic transport of potassium into the cytoplasm. This subunit is responsible for energy coupling to the transport system and for the release of the potassium ions to the cytoplasm. This is Potassium-transporting ATPase ATP-binding subunit from Pseudomonas aeruginosa (strain ATCC 15692 / DSM 22644 / CIP 104116 / JCM 14847 / LMG 12228 / 1C / PRS 101 / PAO1).